We begin with the raw amino-acid sequence, 131 residues long: uncharacterized protein (131 aa).

The next 2 helical transmembrane spans lie at 61–81 and 102–122; these read LLLLPTIYIRSLVSYNVYLPI and VCSIASLFILVLFLFCFALRY.

The protein resides in the membrane. This is an uncharacterized protein from Saccharomyces cerevisiae (strain ATCC 204508 / S288c) (Baker's yeast).